Reading from the N-terminus, the 487-residue chain is Probable Xaa-Pro aminopeptidase CPSG_02684 (487 aa).

Over residues 1–10 (MAGSNTLSSS) the composition is skewed to polar residues. Positions 1–22 (MAGSNTLSSSEHGDDPRGHSYS) are disordered. 4 residues coordinate Mn(2+): Asp275, Asp286, Glu421, and Glu460.

Belongs to the peptidase M24B family. Mn(2+) serves as cofactor.

It catalyses the reaction Release of any N-terminal amino acid, including proline, that is linked to proline, even from a dipeptide or tripeptide.. In terms of biological role, catalyzes the removal of a penultimate prolyl residue from the N-termini of peptides. This Coccidioides posadasii (strain RMSCC 757 / Silveira) (Valley fever fungus) protein is Probable Xaa-Pro aminopeptidase CPSG_02684.